The chain runs to 375 residues: 2-heptyl-3-hydroxy-4(1H)-quinolone synthase (375 aa).

This sequence belongs to the 3-hydroxybenzoate 6-hydroxylase family.

It carries out the reaction 2-heptyl-4(1H)-quinolone + NADH + O2 + H(+) = 2-heptyl-3-hydroxy-4(1H)-quinolone + NAD(+) + H2O. Involved in the degradation pathway of the Pseudomonas aeruginosa quorum sensing signal molecule HHQ (2-heptyl-4(1H)-quinolone) to anthranilate. Catalyzes the hydroxylation of HHQ to PQS (2-heptyl-3-hydroxy-4(1H)-quinolone). The chain is 2-heptyl-3-hydroxy-4(1H)-quinolone synthase from Mycobacteroides abscessus (strain ATCC 19977 / DSM 44196 / CCUG 20993 / CIP 104536 / JCM 13569 / NCTC 13031 / TMC 1543 / L948) (Mycobacterium abscessus).